The chain runs to 387 residues: UDP-N-acetylglucosamine--N-acetylmuramyl-(pentapeptide) pyrophosphoryl-undecaprenol N-acetylglucosamine transferase (387 aa).

Residues 26–28 (TGG), Asn137, Arg177, Ser205, and Gln306 contribute to the UDP-N-acetyl-alpha-D-glucosamine site.

This sequence belongs to the glycosyltransferase 28 family. MurG subfamily.

The protein resides in the cell inner membrane. It catalyses the reaction di-trans,octa-cis-undecaprenyl diphospho-N-acetyl-alpha-D-muramoyl-L-alanyl-D-glutamyl-meso-2,6-diaminopimeloyl-D-alanyl-D-alanine + UDP-N-acetyl-alpha-D-glucosamine = di-trans,octa-cis-undecaprenyl diphospho-[N-acetyl-alpha-D-glucosaminyl-(1-&gt;4)]-N-acetyl-alpha-D-muramoyl-L-alanyl-D-glutamyl-meso-2,6-diaminopimeloyl-D-alanyl-D-alanine + UDP + H(+). Its pathway is cell wall biogenesis; peptidoglycan biosynthesis. Its function is as follows. Cell wall formation. Catalyzes the transfer of a GlcNAc subunit on undecaprenyl-pyrophosphoryl-MurNAc-pentapeptide (lipid intermediate I) to form undecaprenyl-pyrophosphoryl-MurNAc-(pentapeptide)GlcNAc (lipid intermediate II). This Rhodospirillum rubrum (strain ATCC 11170 / ATH 1.1.1 / DSM 467 / LMG 4362 / NCIMB 8255 / S1) protein is UDP-N-acetylglucosamine--N-acetylmuramyl-(pentapeptide) pyrophosphoryl-undecaprenol N-acetylglucosamine transferase.